Consider the following 673-residue polypeptide: DNA ligase (673 aa).

Residues 34–38 (DAEYD), 83–84 (SL), and Glu-116 contribute to the NAD(+) site. Lys-118 functions as the N6-AMP-lysine intermediate in the catalytic mechanism. NAD(+) is bound by residues Arg-139, Glu-176, Lys-293, and Lys-317. 4 residues coordinate Zn(2+): Cys-411, Cys-414, Cys-429, and Cys-435. The BRCT domain maps to 595–673 (NQQNPFFGKT…EDEFLKWVNS (79 aa)).

It belongs to the NAD-dependent DNA ligase family. LigA subfamily. Requires Mg(2+) as cofactor. Mn(2+) serves as cofactor.

It carries out the reaction NAD(+) + (deoxyribonucleotide)n-3'-hydroxyl + 5'-phospho-(deoxyribonucleotide)m = (deoxyribonucleotide)n+m + AMP + beta-nicotinamide D-nucleotide.. Functionally, DNA ligase that catalyzes the formation of phosphodiester linkages between 5'-phosphoryl and 3'-hydroxyl groups in double-stranded DNA using NAD as a coenzyme and as the energy source for the reaction. It is essential for DNA replication and repair of damaged DNA. This chain is DNA ligase, found in Legionella pneumophila (strain Corby).